Reading from the N-terminus, the 396-residue chain is Transcription factor IIIB 50 kDa subunit (396 aa).

A TFIIB-type zinc finger spans residues 3 to 36 (GAKRCPDCGSSEIVEDAHYSQDQLVCADCGCILS). C7, C10, C28, and C31 together coordinate Zn(2+). Copy 2 of the repeat occupies 173–249 (VKSHCRSFKL…SRRLSCSLSR (77 aa)). Residue C342 is modified to Cysteine sulfenic acid (-SOH).

The protein belongs to the TFIIB family. Component of TFIIIB complexes. Interacts with TBP and forms a ternary complex with TBp and target DNA sequences. Post-translationally, in response to oxidative stress, a Cys-residue is reversibly oxidized to cysteine sulfenic acid. This impairs formation of a ternary complex with TBP and DNA and down-regulates expression of target genes in response to oxidative stress.

Its subcellular location is the nucleus. In terms of biological role, general activator of RNA polymerase III transcription. Factor exclusively required for RNA polymerase III transcription of genes with promoter elements upstream of the initiation sites. Contributes to the regulation of gene expression; functions as activator in the absence of oxidative stress. Down-regulates expression of target genes in response to oxidative stress. Overexpression protects cells against apoptosis in response to oxidative stress. In Xenopus laevis (African clawed frog), this protein is Transcription factor IIIB 50 kDa subunit (brf2).